The following is a 306-amino-acid chain: Ribosomal RNA small subunit methyltransferase H (306 aa).

Residues Gly-37–His-39, Asp-56, Asp-102, and Gln-109 each bind S-adenosyl-L-methionine.

Belongs to the methyltransferase superfamily. RsmH family.

It localises to the cytoplasm. It catalyses the reaction cytidine(1402) in 16S rRNA + S-adenosyl-L-methionine = N(4)-methylcytidine(1402) in 16S rRNA + S-adenosyl-L-homocysteine + H(+). Its function is as follows. Specifically methylates the N4 position of cytidine in position 1402 (C1402) of 16S rRNA. The sequence is that of Ribosomal RNA small subunit methyltransferase H from Nautilia profundicola (strain ATCC BAA-1463 / DSM 18972 / AmH).